A 333-amino-acid chain; its full sequence is Leucine carboxyl methyltransferase 1 (333 aa).

S-adenosyl-L-methionine contacts are provided by residues Lys-42, Arg-82, Gly-107, Asp-131, 181–182, and Glu-208; that span reads DL.

This sequence belongs to the methyltransferase superfamily. LCMT family.

It carries out the reaction [phosphatase 2A protein]-C-terminal L-leucine + S-adenosyl-L-methionine = [phosphatase 2A protein]-C-terminal L-leucine methyl ester + S-adenosyl-L-homocysteine. Methylates the carboxyl group of the C-terminal leucine residue of protein phosphatase 2A catalytic subunits to form alpha-leucine ester residues. This Caenorhabditis elegans protein is Leucine carboxyl methyltransferase 1.